A 1630-amino-acid polypeptide reads, in one-letter code: Transient receptor potential cation channel subfamily M member 1 (1630 aa).

Disordered regions lie at residues 1 to 25 (MGSM…GSQK), 65 to 92 (PLPS…SVSK), 453 to 492 (APPV…EVEE), 620 to 643 (LGME…EEEI), and 824 to 858 (SKEN…HKKQ). Topologically, residues 1–877 (MGSMRKMSSS…CEFYNAPIVK (877 aa)) are cytoplasmic. Residues 8–25 (SSSFKRGSIKSSTSGSQK) are compositionally biased toward low complexity. Residues 69-92 (VTPSSTAEDTKQGDAQSGKWSVSK) show a composition bias toward polar residues. Residues 474-485 (GRGKGKGKKKGK) are compositionally biased toward basic residues. 2 stretches are compositionally biased toward basic and acidic residues: residues 825–834 (KENEDGKEKE) and 845–855 (GSRKGDEENEH). A helical membrane pass occupies residues 878–898 (FWFYTISYLGYLLLFNYVILV). At 899–944 (RMDGWPSPQEWIVISYIVSLALEKIREILMSEPGKLSQKIKVWLQE) the chain is on the extracellular side. A helical membrane pass occupies residues 945 to 965 (YWNITDLVAISMFMVGAILRL). The Cytoplasmic segment spans residues 966–975 (QNQPYMGYGR). A helical membrane pass occupies residues 976–996 (VIYCVDIILWYIRVLDIFGVN). Residues 997–1008 (KYLGPYVMMIGK) lie on the Extracellular side of the membrane. Residues 1009 to 1029 (MMIDMLYFVVIMLVVLMSFGV) traverse the membrane as a helical segment. Topologically, residues 1030 to 1107 (ARQAILHPEE…CIPGAWLTPA (78 aa)) are cytoplasmic. The helical transmembrane segment at 1108 to 1128 (LMACYLLVANILLVNLLIAVF) threads the bilayer. The N-linked (GlcNAc...) asparagine glycan is linked to N1129. Topologically, residues 1129-1158 (NNTFFEVKSISNQVWKFQRYQLIMTFHDRP) are extracellular. The helical transmembrane segment at 1159–1179 (VLPPPMIILSHIYIIVMRLSG) threads the bilayer. Residues 1180–1630 (RCRKKREGDQ…QEKGNPETEC (451 aa)) are Cytoplasmic-facing. Residues 1235-1255 (IRVTSERVENMSMRLEEINER) adopt a coiled-coil conformation. Disordered stretches follow at residues 1362–1414 (EDVK…AGEL) and 1575–1630 (CLRS…ETEC).

Belongs to the transient receptor (TC 1.A.4) family. LTrpC subfamily. TRPM1 sub-subfamily. As to quaternary structure, interacts with TRPM3; the interaction results in the formation of a heteromultimeric cation channel complex that are functionally different from the homomeric channels. Interacts with GPR179. Associates with both guanine nucleotide-binding proteins G(o) and beta-gamma G protein dimer; implicated in directly regulating TRPM1 channel open-state.

It localises to the cell membrane. The protein localises to the endoplasmic reticulum membrane. It is found in the cell projection. Its subcellular location is the axon. It carries out the reaction Ca(2+)(in) = Ca(2+)(out). The catalysed reaction is Mg(2+)(in) = Mg(2+)(out). It catalyses the reaction Mn(2+)(in) = Mn(2+)(out). The enzyme catalyses Ni(2+)(in) = Ni(2+)(out). Its activity is regulated as follows. Inhibited by extracellular zinc ions. Inhibited by intracellular Mg(2+). Activated by the neuroactive steroid pregnenolone sulfate. Negatively regulated by activation of GRM6 receptors in the ON-bipolar cells. Constitutively open nonselective divalent cation-conducting channels which mediate the influx of Ca(2+), Mg(2+), Mn(2+), Ba(2+), and Ni(2+) into the cytoplasm, leading to membrane depolarization. Impermeable to zinc ions. In addition, forms heteromultimeric ion channels with TRPM3 which are permeable for calcium and zinc ions. Plays an essential role for the depolarizing photoresponse of retinal ON bipolar cells. In the dark, tonic release of glutamate activates the G-protein coupled receptor for glutamate GRM6, its activation induces the release of G(o) protein and the beta-gamma G protein dimer. Both subunits can interact and inactivate the TRPM1 channel. A light onset, induces decrease in glutamate release and deactivation of GRM6 leading to channel opening and membrane depolarization. May play a role in metastasis suppression. In Rattus norvegicus (Rat), this protein is Transient receptor potential cation channel subfamily M member 1.